The following is a 267-amino-acid chain: RWD domain-containing protein 3 (267 aa).

The RWD domain occupies 7 to 114 (QELSALAAIF…LWTQQNLRHI (108 aa)). Interaction with UBE2I/UBC9 regions lie at residues 13-15 (AAI) and 100-102 (VHE).

Interacts with UBE2I/UBC9, NFKBIA, HIF1A and NCOA2.

It is found in the nucleus. The protein localises to the cytoplasm. Its function is as follows. Enhancer of SUMO conjugation. Via its interaction with UBE2I/UBC9, increases SUMO conjugation to proteins by promoting the binding of E1 and E2 enzymes, thioester linkage between SUMO and UBE2I/UBC9 and transfer of SUMO to specific target proteins which include HIF1A, PIAS, NFKBIA, NR3C1 and TOP1. Positively regulates the NF-kappa-B signaling pathway by enhancing the sumoylation of NF-kappa-B inhibitor alpha (NFKBIA), promoting its stabilization which consequently leads to an increased inhibition of NF-kappa-B transcriptional activity. Negatively regulates the hypoxia-inducible factor-1 alpha (HIF1A) signaling pathway by increasing the sumoylation of HIF1A, promoting its stabilization, transcriptional activity and the expression of its target gene VEGFA during hypoxia. Has no effect on ubiquitination. The sequence is that of RWD domain-containing protein 3 (Rwdd3) from Rattus norvegicus (Rat).